The chain runs to 137 residues: Small ribosomal subunit protein uS12 (137 aa).

The tract at residues M1–P55 is disordered. At D102 the chain carries 3-methylthioaspartic acid. The interval S118–N137 is disordered.

It belongs to the universal ribosomal protein uS12 family. As to quaternary structure, part of the 30S ribosomal subunit. Contacts proteins S8 and S17. May interact with IF1 in the 30S initiation complex.

In terms of biological role, with S4 and S5 plays an important role in translational accuracy. Its function is as follows. Interacts with and stabilizes bases of the 16S rRNA that are involved in tRNA selection in the A site and with the mRNA backbone. Located at the interface of the 30S and 50S subunits, it traverses the body of the 30S subunit contacting proteins on the other side and probably holding the rRNA structure together. The combined cluster of proteins S8, S12 and S17 appears to hold together the shoulder and platform of the 30S subunit. This chain is Small ribosomal subunit protein uS12, found in Staphylococcus epidermidis (strain ATCC 35984 / DSM 28319 / BCRC 17069 / CCUG 31568 / BM 3577 / RP62A).